Reading from the N-terminus, the 58-residue chain is Conotoxin Ar5.4 (58 aa).

The propeptide occupies 1 to 20; sequence RIQSDLIRAALEDADMKNEK.

This sequence belongs to the conotoxin T superfamily. Contains 2 disulfide bonds that can be either 'C1-C3, C2-C4' or 'C1-C4, C2-C3', since these disulfide connectivities have been observed for conotoxins with cysteine framework V (for examples, see AC P0DQQ7 and AC P81755). Expressed by the venom duct.

The protein localises to the secreted. In Conus arenatus (Sand-dusted cone), this protein is Conotoxin Ar5.4.